The sequence spans 300 residues: uncharacterized protein (300 aa).

The active-site Proton acceptor is the His274.

The protein belongs to the AB hydrolase superfamily. In terms of assembly, monomer.

It catalyses the reaction a carboxylic ester + H2O = an alcohol + a carboxylate + H(+). This is an uncharacterized protein from Bacillus subtilis (strain 168).